The sequence spans 382 residues: Prolargin (382 aa).

Positions 1–20 (MRSPLCWLLPLLILASVAQG) are cleaved as a signal peptide. Residues 19 to 66 (QGQPTRRPRPGTGPGRRPRPRPRPTPSFPQPDEPAEPTDLPPPLPPGP) form a disordered region. 2 stretches are compositionally biased toward pro residues: residues 41–50 (RPTPSFPQPD) and 57–66 (DLPPPLPPGP). LRR repeat units lie at residues 95 to 114 (RKVP…NNFI), 115 to 138 (TELP…NNRI), 139 to 162 (RKID…KNQL), 163 to 183 (EEVP…QNHI), 184 to 207 (SRIP…HNRL), 208 to 233 (SDGV…HNIL), 234 to 254 (RKMP…SNKI), 255 to 278 (ETIP…YNKL), 279 to 303 (TDRG…HNRI), 304 to 323 (SSVP…NNSI), 324 to 362 (EKIN…GNYL), and 363 to 382 (KPPI…SVVI). The N-linked (GlcNAc...) asparagine glycan is linked to asparagine 124. Residues asparagine 289, asparagine 320, and asparagine 327 are each glycosylated (N-linked (GlcNAc...) asparagine). Cysteine 332 and cysteine 373 are disulfide-bonded.

This sequence belongs to the small leucine-rich proteoglycan (SLRP) family. SLRP class II subfamily. Binds the basement membrane heparan sulfate proteoglycan perlecan and triple helical collagens type I and type II. Glycosylated; contains heparan sulfate. Connective tissue.

The protein resides in the secreted. It is found in the extracellular space. Its subcellular location is the extracellular matrix. Functionally, may anchor basement membranes to the underlying connective tissue. The sequence is that of Prolargin (PRELP) from Homo sapiens (Human).